Here is a 40-residue protein sequence, read N- to C-terminus: Large ribosomal subunit protein bL36B (40 aa).

The protein belongs to the bacterial ribosomal protein bL36 family.

This chain is Large ribosomal subunit protein bL36B, found in Kocuria rhizophila (strain ATCC 9341 / DSM 348 / NBRC 103217 / DC2201).